Here is a 443-residue protein sequence, read N- to C-terminus: Xaa-Pro dipeptidase (443 aa).

Positions 244, 255, 336, 381, and 420 each coordinate Mn(2+).

It belongs to the peptidase M24B family. Bacterial-type prolidase subfamily. Mn(2+) serves as cofactor.

The enzyme catalyses Xaa-L-Pro dipeptide + H2O = an L-alpha-amino acid + L-proline. Splits dipeptides with a prolyl residue in the C-terminal position. The protein is Xaa-Pro dipeptidase of Stenotrophomonas maltophilia (strain R551-3).